The following is a 758-amino-acid chain: MQERLRILDQLLPELNVLLRLLDHEFLSATTREKQSAVCSILRQLQPAPGDELDFQYMNTAAYHNGTSFVESLFEEFDCDLHDLHDMQDEYRDSSENLSCQLPPPPSAPPPPLPTTPPPEDYYEEAVPLGPGKFTEYITSRNSSSPPNSIEDGYYEEADNNYPMTRINGEQKNSYNESDGLSSSYESYDEEDEEGKAQRLMLQWPSQEASLHLVRDSRICAFLLRKKRFGQWAKQLTLIKDNKLLCYKSSKDRQPHLEIPLALCNVAYVPKDGRRKKHELRFSLPNGEMLVLAVQSREQAEEWLRVIKEVISPSTGSSPASPALRHRLDLDKRLSHDKTSDSDSAANGENSSLSSGKENRDTGKCRKGGLAELKGSMSRAAGKKITRIISFSKKKQSTEEHHTSSTEEEVPCCGYLSVLVNQCWKERWCCLKGHTLYFHKDRNDLRTHINAIALRGCEVSPGFGPLHPFAFRILRQSQEVTALEASCSEEMGRWLGLLLAQTGSKTKPEALHYDYVDVETIANIATAVRHSFLWATSSHSSTSDLRLYDDVSYEKVEDPKRAPGVAQVKRHASSCSEKSRRVESEVKVKRHASNANQYKYGKTRAEEDARKFIVEKEKLEKEKEAIRSKLIAMKRERRELKEMLKNCSGKQQKEMEERLAMLEEQCKNNEKVRVDLEIQLTEVKENLKKSLAGGPTLGLAVTGKSENPPQKSQQPRSPPDRLLPVNSAAEMRRRSPSIAASSKGKVLQKAKEWEKKKP.

The tract at residues 91–194 is disordered; that stretch reads YRDSSENLSC…YESYDEEDEE (104 aa). A compositionally biased stretch (pro residues) spans 102–120; sequence LPPPPSAPPPPLPTTPPPE. A compositionally biased stretch (polar residues) spans 137 to 148; it reads YITSRNSSSPPN. Positions 177–186 are enriched in low complexity; that stretch reads ESDGLSSSYE. The region spanning 216 to 312 is the PH 1 domain; it reads DSRICAFLLR…WLRVIKEVIS (97 aa). Residues 335–369 form a disordered region; it reads SHDKTSDSDSAANGENSSLSSGKENRDTGKCRKGG. A compositionally biased stretch (polar residues) spans 342-356; sequence SDSAANGENSSLSSG. Positions 409–503 constitute a PH 2 domain; the sequence is EVPCCGYLSV…WLGLLLAQTG (95 aa). Residues 602-690 adopt a coiled-coil conformation; that stretch reads KTRAEEDARK…TEVKENLKKS (89 aa). The disordered stretch occupies residues 692–758; it reads AGGPTLGLAV…KAKEWEKKKP (67 aa). Basic and acidic residues predominate over residues 749 to 758; sequence KAKEWEKKKP.

Its subcellular location is the cytoplasm. It localises to the cell projection. It is found in the podosome. The protein resides in the invadopodium. The protein localises to the cytoskeleton. Its subcellular location is the stress fiber. May be involved in podosome and invadosome formation. This chain is Actin filament-associated protein 1-like 1 (afap1l1), found in Xenopus tropicalis (Western clawed frog).